The chain runs to 391 residues: Transmembrane protein 79 (391 aa).

The segment at 1 to 114 (MTEPETLALL…TKSEEPFKED (114 aa)) is disordered. Residues 1–200 (MTEPETLALL…GREALRAVAS (200 aa)) lie on the Cytoplasmic side of the membrane. Over residues 103-114 (APTKSEEPFKED) the composition is skewed to basic and acidic residues. A helical transmembrane segment spans residues 201-221 (VVAALIFFPCLLYGAYAFLPF). The Extracellular portion of the chain corresponds to 222-240 (DAPRLPTMSSRLVYTLRCG). A helical transmembrane segment spans residues 241-261 (VFATFPIVLGLLVYGLSLLCF). The Cytoplasmic segment spans residues 262–279 (SALRPFGEPRREVEIHRQ). The helical transmembrane segment at 280 to 300 (YVAQSVQLFILYFFNLAVLST) threads the bilayer. Topologically, residues 301 to 309 (YLPQDTLKL) are extracellular. A helical transmembrane segment spans residues 310–330 (LPLLTGLFAISRLIYWLTFAV). Residues 331-339 (GRSFRGFGY) lie on the Cytoplasmic side of the membrane. Residues 340-360 (GLTFLPLLAMLVWNLYYMFVV) form a helical membrane-spanning segment. Residues 361–391 (EPERMLTASESRLDYPDHARSVSDYRPRSWG) lie on the Extracellular side of the membrane.

As to expression, expressed in the epidermis of the skin. Expressed in epithelial cells of the outermost layer of the stratum granulosum (SG) and in hair follicles (at protein level).

The protein resides in the lysosome. Its subcellular location is the golgi apparatus. The protein localises to the trans-Golgi network. It localises to the membrane. In terms of biological role, contributes to the epidermal integrity and skin barrier function. Plays a role in the lamellar granule (LG) secretory system and in the stratum corneum (SC) epithelial cell formation. The sequence is that of Transmembrane protein 79 (Tmem79) from Mus musculus (Mouse).